Here is a 422-residue protein sequence, read N- to C-terminus: Histidinol dehydrogenase (422 aa).

Residues tyrosine 123, glutamine 183, and asparagine 206 each contribute to the NAD(+) site. Positions 229, 251, and 254 each coordinate substrate. The Zn(2+) site is built by glutamine 251 and histidine 254. Catalysis depends on proton acceptor residues glutamate 320 and histidine 321. Residues histidine 321, aspartate 354, glutamate 408, and histidine 413 each contribute to the substrate site. Aspartate 354 is a binding site for Zn(2+). Histidine 413 contacts Zn(2+).

Belongs to the histidinol dehydrogenase family. Requires Zn(2+) as cofactor.

The enzyme catalyses L-histidinol + 2 NAD(+) + H2O = L-histidine + 2 NADH + 3 H(+). It participates in amino-acid biosynthesis; L-histidine biosynthesis; L-histidine from 5-phospho-alpha-D-ribose 1-diphosphate: step 9/9. Catalyzes the sequential NAD-dependent oxidations of L-histidinol to L-histidinaldehyde and then to L-histidine. The protein is Histidinol dehydrogenase of Haloarcula marismortui (strain ATCC 43049 / DSM 3752 / JCM 8966 / VKM B-1809) (Halobacterium marismortui).